Here is a 135-residue protein sequence, read N- to C-terminus: MARTKQTARKSTGGKAPRKQLATKAARKTPATGGVKKPHRYRPGTVALREIRKYQKSTELLIRKLPFQRLVREIAQDFKTDLRFQSQAVLALQEAAEAYLVGLFEDTNLCAIHAKRVTIMPKDIQLARRIRGERA.

The tract at residues 1-40 (MARTKQTARKSTGGKAPRKQLATKAARKTPATGGVKKPHR) is disordered. Lysine 5 carries the post-translational modification N6-methyllysine. Residue lysine 10 is modified to N6-acetyllysine; alternate. At lysine 10 the chain carries N6-methyllysine; alternate. Serine 11 is modified (phosphoserine). Residue threonine 12 is modified to Phosphothreonine. Lysine 15, lysine 19, and lysine 24 each carry N6-acetyllysine. The residue at position 28 (lysine 28) is an N6-acetyllysine; alternate. Lysine 28 carries the N6-methyllysine; alternate modification. N6-methyllysine occurs at positions 36 and 37.

The protein belongs to the histone H3 family. In terms of assembly, the nucleosome is a histone octamer containing two molecules each of H2A, H2B, H3 and H4 assembled in one H3-H4 heterotetramer and two H2A-H2B heterodimers. The octamer wraps approximately 147 bp of DNA. Acetylation is generally linked to gene activation. Acetylated to form H3K9ac (11%), H3K14ac (17%), H3K18ac (11%), H3K23ac (16%) and H3K27ac (7%). H3K4, H3K35 and H3K36 are not acetylated. H3K4me prevents acetylation. 32% of the histone H3 are acetylated with, on average, 2.4 acetyl-Lys. They are all continuously deacatylated and re-acetylated with a half-life of approximately 2 minutes. Post-translationally, monomethylated to form H3K4me1 (81%), H3K9me1 (16%), H3K27me1 (25%), H3K35me1 (25%) and H3K36me1 (5%). No methylation at H3K14, H3K18 and H3K23. Methylated by a protein complex that includes Mut11. Set1 methylates specifically H3K4. H3K4me1 is associated with silenced euchromatin. Set3 forms H3K9me1, while H3K9me2 is undetected. H3K9me1 is specifically associated with silent, multi-copy transgenes. In terms of processing, no phosphorylation detected.

Its subcellular location is the nucleus. It is found in the chromosome. Core component of nucleosome. Nucleosomes wrap and compact DNA into chromatin, limiting DNA accessibility to the cellular machineries which require DNA as a template. Histones thereby play a central role in transcription regulation, DNA repair, DNA replication and chromosomal stability. DNA accessibility is regulated via a complex set of post-translational modifications of histones, also called histone code, and nucleosome remodeling. The chain is Histone H3 type 2 (ch3-II) from Chlamydomonas reinhardtii (Chlamydomonas smithii).